The sequence spans 116 residues: Putative pterin-4-alpha-carbinolamine dehydratase (116 aa).

Belongs to the pterin-4-alpha-carbinolamine dehydratase family.

The enzyme catalyses (4aS,6R)-4a-hydroxy-L-erythro-5,6,7,8-tetrahydrobiopterin = (6R)-L-erythro-6,7-dihydrobiopterin + H2O. The protein is Putative pterin-4-alpha-carbinolamine dehydratase of Microcystis aeruginosa (strain NIES-843 / IAM M-2473).